The primary structure comprises 896 residues: Protein translocase subunit SecA (896 aa).

ATP contacts are provided by residues Q87, 105–109 (GEGKT), and D507. The tract at residues 855-879 (LSENDEASETQTFRRQEKKIGRNDP) is disordered. The segment covering 866-876 (TFRRQEKKIGR) has biased composition (basic and acidic residues). The Zn(2+) site is built by C880, C882, C891, and H892.

It belongs to the SecA family. As to quaternary structure, monomer and homodimer. Part of the essential Sec protein translocation apparatus which comprises SecA, SecYEG and auxiliary proteins SecDF-YajC and YidC. The cofactor is Zn(2+).

It is found in the cell inner membrane. Its subcellular location is the cytoplasm. It carries out the reaction ATP + H2O + cellular proteinSide 1 = ADP + phosphate + cellular proteinSide 2.. In terms of biological role, part of the Sec protein translocase complex. Interacts with the SecYEG preprotein conducting channel. Has a central role in coupling the hydrolysis of ATP to the transfer of proteins into and across the cell membrane, serving both as a receptor for the preprotein-SecB complex and as an ATP-driven molecular motor driving the stepwise translocation of polypeptide chains across the membrane. This Legionella pneumophila (strain Lens) protein is Protein translocase subunit SecA.